We begin with the raw amino-acid sequence, 335 residues long: 4-hydroxythreonine-4-phosphate dehydrogenase (335 aa).

Residues histidine 135 and threonine 136 each coordinate substrate. A divalent metal cation-binding residues include histidine 165, histidine 210, and histidine 265. 3 residues coordinate substrate: lysine 273, asparagine 282, and arginine 291.

Belongs to the PdxA family. Homodimer. Requires Zn(2+) as cofactor. The cofactor is Mg(2+). Co(2+) serves as cofactor.

The protein resides in the cytoplasm. The catalysed reaction is 4-(phosphooxy)-L-threonine + NAD(+) = 3-amino-2-oxopropyl phosphate + CO2 + NADH. It functions in the pathway cofactor biosynthesis; pyridoxine 5'-phosphate biosynthesis; pyridoxine 5'-phosphate from D-erythrose 4-phosphate: step 4/5. In terms of biological role, catalyzes the NAD(P)-dependent oxidation of 4-(phosphooxy)-L-threonine (HTP) into 2-amino-3-oxo-4-(phosphooxy)butyric acid which spontaneously decarboxylates to form 3-amino-2-oxopropyl phosphate (AHAP). This is 4-hydroxythreonine-4-phosphate dehydrogenase from Saccharophagus degradans (strain 2-40 / ATCC 43961 / DSM 17024).